Here is a 227-residue protein sequence, read N- to C-terminus: Protein Saci_0792 (227 aa).

Positions 15–209 constitute an AMMECR1 domain; sequence DIGKQLIKIA…EINKNTDEII (195 aa).

The chain is Protein Saci_0792 from Sulfolobus acidocaldarius (strain ATCC 33909 / DSM 639 / JCM 8929 / NBRC 15157 / NCIMB 11770).